The primary structure comprises 198 residues: Recombination protein RecR (198 aa).

The C4-type zinc finger occupies 56–71 (CGVCGNVDTSNPCGIC). One can recognise a Toprim domain in the interval 79–174 (RSICVVEEVA…RVTQLAHGLP (96 aa)).

The protein belongs to the RecR family.

Its function is as follows. May play a role in DNA repair. It seems to be involved in an RecBC-independent recombinational process of DNA repair. It may act with RecF and RecO. The protein is Recombination protein RecR of Novosphingobium aromaticivorans (strain ATCC 700278 / DSM 12444 / CCUG 56034 / CIP 105152 / NBRC 16084 / F199).